A 123-amino-acid polypeptide reads, in one-letter code: Gamma-synuclein (123 aa).

Repeat copies occupy residues glutamate 20–alanine 30 and glutamate 31–glycine 41. The interval glutamate 20–serine 67 is 4 X 11 AA tandem repeats of [EGSA]-K-T-K-[EQ]-[GQ]-V-X(4). A 3; approximate repeat occupies threonine 42–alanine 56. Copy 4 of the repeat occupies glutamate 57–serine 67. Phosphoserine is present on residues serine 67 and serine 72. Positions threonine 91 to aspartate 123 are disordered. Over residues glutamine 107 to aspartate 123 the composition is skewed to basic and acidic residues. A Phosphoserine; by BARK1, CaMK2 and CK2 modification is found at serine 120.

It belongs to the synuclein family. May be a centrosome-associated protein. Interacts with MYOC; affects its secretion and its aggregation. Phosphorylated. Phosphorylation by GRK5 appears to occur on residues distinct from the residue phosphorylated by other kinases. As to expression, highly expressed in brain, particularly in the substantia nigra. Also expressed in the corpus callosum, heart, skeletal muscle, ovary, testis, colon and spleen. Weak expression in pancreas, kidney and lung. Expressed predominantly in the cell bodies and axons of primary sensory neurons, sympathetic neurons and motoneurons.

The protein localises to the cytoplasm. It localises to the perinuclear region. It is found in the cytoskeleton. The protein resides in the microtubule organizing center. Its subcellular location is the centrosome. The protein localises to the spindle. In terms of biological role, plays a role in neurofilament network integrity. May be involved in modulating axonal architecture during development and in the adult. In vitro, increases the susceptibility of neurofilament-H to calcium-dependent proteases. May also function in modulating the keratin network in skin. Activates the MAPK and Elk-1 signal transduction pathway. This Mus musculus (Mouse) protein is Gamma-synuclein (Sncg).